The sequence spans 301 residues: ATP synthase gamma chain (301 aa).

It belongs to the ATPase gamma chain family. In terms of assembly, F-type ATPases have 2 components, CF(1) - the catalytic core - and CF(0) - the membrane proton channel. CF(1) has five subunits: alpha(3), beta(3), gamma(1), delta(1), epsilon(1). CF(0) has three main subunits: a, b and c.

Its subcellular location is the cell inner membrane. Functionally, produces ATP from ADP in the presence of a proton gradient across the membrane. The gamma chain is believed to be important in regulating ATPase activity and the flow of protons through the CF(0) complex. The sequence is that of ATP synthase gamma chain from Bordetella petrii (strain ATCC BAA-461 / DSM 12804 / CCUG 43448).